The following is a 281-amino-acid chain: ATP synthase gamma chain (281 aa).

This sequence belongs to the ATPase gamma chain family. F-type ATPases have 2 components, CF(1) - the catalytic core - and CF(0) - the membrane proton channel. CF(1) has five subunits: alpha(3), beta(3), gamma(1), delta(1), epsilon(1). CF(0) has three main subunits: a, b and c.

The protein localises to the cell membrane. Functionally, produces ATP from ADP in the presence of a proton gradient across the membrane. The gamma chain is believed to be important in regulating ATPase activity and the flow of protons through the CF(0) complex. This Clostridium pasteurianum protein is ATP synthase gamma chain.